The chain runs to 210 residues: Uracil phosphoribosyltransferase (210 aa).

5-phospho-alpha-D-ribose 1-diphosphate-binding positions include Arg-78, Arg-103, and 130–138 (DPMLATGGS). Uracil-binding positions include Ile-193 and 198–200 (GDA). Asp-199 contributes to the 5-phospho-alpha-D-ribose 1-diphosphate binding site.

Belongs to the UPRTase family. It depends on Mg(2+) as a cofactor.

It carries out the reaction UMP + diphosphate = 5-phospho-alpha-D-ribose 1-diphosphate + uracil. It participates in pyrimidine metabolism; UMP biosynthesis via salvage pathway; UMP from uracil: step 1/1. Allosterically activated by GTP. Functionally, catalyzes the conversion of uracil and 5-phospho-alpha-D-ribose 1-diphosphate (PRPP) to UMP and diphosphate. This is Uracil phosphoribosyltransferase from Salinibacter ruber (strain DSM 13855 / M31).